The sequence spans 273 residues: Aliphatic sulfonates import ATP-binding protein SsuB 2 (273 aa).

Residues 17–241 (LLDLRITRKL…PRDRRDPTLA (225 aa)) form the ABC transporter domain. 50 to 57 (GPSGCGKS) is an ATP binding site.

It belongs to the ABC transporter superfamily. Aliphatic sulfonates importer (TC 3.A.1.17.2) family. As to quaternary structure, the complex is composed of two ATP-binding proteins (SsuB), two transmembrane proteins (SsuC) and a solute-binding protein (SsuA).

The protein resides in the cell inner membrane. It catalyses the reaction ATP + H2O + aliphatic sulfonate-[sulfonate-binding protein]Side 1 = ADP + phosphate + aliphatic sulfonateSide 2 + [sulfonate-binding protein]Side 1.. In terms of biological role, part of the ABC transporter complex SsuABC involved in aliphatic sulfonates import. Responsible for energy coupling to the transport system. The protein is Aliphatic sulfonates import ATP-binding protein SsuB 2 of Burkholderia lata (strain ATCC 17760 / DSM 23089 / LMG 22485 / NCIMB 9086 / R18194 / 383).